The following is a 102-amino-acid chain: RxLR effector protein PexRD41 (102 aa).

An N-terminal signal peptide occupies residues methionine 1 to alanine 21. The short motif at arginine 39–glutamate 53 is the RxLR-dEER element.

The protein belongs to the RxLR effector family. In terms of assembly, interacts with host KRBP1.

The protein localises to the secreted. Its subcellular location is the host cytoplasm. It localises to the host nucleus. The protein resides in the host nucleolus. Its function is as follows. Effector that enhances P.infestans colonization of host plant leaves. During the early stages of P.infestans infection, interacts with and stabilizes host potato K-homology (KH) RNA-binding protein KRBP1, leading to its accumulation. The chain is RxLR effector protein PexRD41 from Phytophthora infestans (strain T30-4) (Potato late blight agent).